A 614-amino-acid chain; its full sequence is MRLFAAATVALVLLLGQAAGEELAEERAGQAQGDAESTESSETTTDQAVSEPPITLVHVLNPGEREYLSPNLIGVQNIAMTFLPLSMNFVNIIDAFREITAGVRYEILLNALDTKAIQPAEADIVCRLVILEKPWLRTQWGDKHRELVTSNCTDPAVNSVAGDPAEKARLLNEKYVHRSRRSANDILGRHKPYDEEAAKAQLQKSLDKLTAGEGPHYKIVKVYSASRQVDSGILTRIDADLIDGSEEQHRCIVDIWTKVWVRKDEHEITFKCRNQPVVQARHTRSVEWAEKKTHKKHSHRFDKVDHLFYKFQVRFGRRYVSTAERQMRLRIFRQNLKTIEELNANEMGSAKYGITEFADMTSSEYKERTGLWQRDEAKATGGSAAVVPAYHGELPKEFDWRQKDAVTQVKNQGSCGSCWAFSVTGNIEGLYAVKTGELKEFSEQELLDCDTTDSACNGGLMDNAYKAIKDIGGLEYEAEYPYKAKKNQCHFNRTLSHVQVAGFVDLPKGNETAMQEWLLANGPISIGINANAMQFYRGGVSHPWKALCSKKNLDHGVLVVGYGVSDYPNFHKTLPYWIVKNSWGPRWGEQGYYRVYRGDNTCGVSEMATSAVLA.

The first 20 residues, M1–G20, serve as a signal peptide directing secretion. A propeptide spans E21 to E393 (activation peptide). Positions E25–S50 are disordered. Residues G29–T45 are compositionally biased toward low complexity. An N-linked (GlcNAc...) asparagine glycan is attached at N151. Intrachain disulfides connect C415–C456 and C449–C489. The active site involves C418. N-linked (GlcNAc...) asparagine glycans are attached at residues N492 and N510. C548 and C602 are oxidised to a cystine. Catalysis depends on residues H555 and N581.

Belongs to the peptidase C1 family.

It carries out the reaction The recombinant enzyme cleaves synthetic substrates with Phe and Leu (better than Val) in P2, with high specificity constant (kcat/Km) comparable to that of cathepsin L.. May have a role in autophagic cell death. The protein is Cathepsin F of Drosophila melanogaster (Fruit fly).